We begin with the raw amino-acid sequence, 185 residues long: Protein GrpE (185 aa).

Positions 1 to 40 (MSEEKKDEILEQETVETKEEIKTEEAEQKTESLEEKVARL) are disordered.

The protein belongs to the GrpE family. Homodimer.

It is found in the cytoplasm. Participates actively in the response to hyperosmotic and heat shock by preventing the aggregation of stress-denatured proteins, in association with DnaK and GrpE. It is the nucleotide exchange factor for DnaK and may function as a thermosensor. Unfolded proteins bind initially to DnaJ; upon interaction with the DnaJ-bound protein, DnaK hydrolyzes its bound ATP, resulting in the formation of a stable complex. GrpE releases ADP from DnaK; ATP binding to DnaK triggers the release of the substrate protein, thus completing the reaction cycle. Several rounds of ATP-dependent interactions between DnaJ, DnaK and GrpE are required for fully efficient folding. The sequence is that of Protein GrpE from Aliarcobacter butzleri (strain RM4018) (Arcobacter butzleri).